The chain runs to 61 residues: Large ribosomal subunit protein uL30 (61 aa).

The protein belongs to the universal ribosomal protein uL30 family. Part of the 50S ribosomal subunit.

This Shewanella piezotolerans (strain WP3 / JCM 13877) protein is Large ribosomal subunit protein uL30.